The chain runs to 130 residues: Small ribosomal subunit protein uS11 (130 aa).

The protein belongs to the universal ribosomal protein uS11 family. Part of the 30S ribosomal subunit. Interacts with proteins S7 and S18. Binds to IF-3.

Its function is as follows. Located on the platform of the 30S subunit, it bridges several disparate RNA helices of the 16S rRNA. Forms part of the Shine-Dalgarno cleft in the 70S ribosome. In Rippkaea orientalis (strain PCC 8801 / RF-1) (Cyanothece sp. (strain PCC 8801)), this protein is Small ribosomal subunit protein uS11.